The sequence spans 855 residues: Mitochondrial 15S rRNA processing factor CCM1 (855 aa).

Residues 29-61 (PTAMRTRRRTRRHEREPNLRKRQGGSHSNLKEN) are disordered. 3 PPR repeats span residues 234 to 265 (DVDM…MKKL), 317 to 351 (NKVN…SLSH), and 354 to 388 (DVAT…KMEP).

The protein belongs to the CCM1 family. In terms of assembly, binds to mitochondrial small subunit 15S rRNA.

It is found in the mitochondrion. Functionally, regulates mitochondrial small subunit maturation by controlling 15S rRNA 5'-end processing. Localizes to the 5' precursor of the 15S rRNA in a position that is subsequently occupied by mS47 in the mature yeast mtSSU. Uses structure and sequence-specific RNA recognition, binding to a single-stranded region of the precursor and specifically recognizing bases -6 to -1. The exchange of Ccm1 for mS47 is coupled to the irreversible removal of precursor rRNA that is accompanied by conformational changes of the mitoribosomal proteins uS5m and mS26. These conformational changes signal completion of 5'-end rRNA processing through protection of the mature 5'-end of the 15S rRNA and stabilization of mS47. The removal of the 5' precursor together with the dissociation of Ccm1 may be catalyzed by the 5'-3' exoribonuclease Pet127. Involved in the specific removal of group I introns in mitochondrial encoded transcripts. The polypeptide is Mitochondrial 15S rRNA processing factor CCM1 (CCM1) (Eremothecium gossypii (strain ATCC 10895 / CBS 109.51 / FGSC 9923 / NRRL Y-1056) (Yeast)).